The primary structure comprises 385 residues: Sulfoquinovose monooxygenase (385 aa).

The interval 366–385 (AYGRVPSETPATPLGNGERH) is disordered.

It belongs to the SsuD family. Homodimer.

It carries out the reaction 6-sulfo-D-quinovose + FMNH2 + O2 = 6-dehydro-D-glucose + FMN + sulfite + H2O + 2 H(+). Part of the sulfoquinovose monooxygenase (sulfo-SMO) pathway, a D-sulfoquinovose degradation pathway that enables the complete utilization of all carbons within sulfoquinovose (SQ) with concomitant production of inorganic sulfite. Catalyzes the oxidative desulfurization of sulfoquinovose to sulfite and 6-dehydro-D-glucose. Is highly specific for sulfoquinovose and cannot use sulfoquinovosyl glycerol. FMNH(2) is provided by the FMN reductase SmoA. The chain is Sulfoquinovose monooxygenase from Agrobacterium fabrum (strain C58 / ATCC 33970) (Agrobacterium tumefaciens (strain C58)).